The following is an 81-amino-acid chain: Acyl carrier protein (81 aa).

The region spanning 2–77 is the Carrier domain; it reads ASVEEKVKQI…DAVDYITAHA (76 aa). Ser37 carries the O-(pantetheine 4'-phosphoryl)serine modification.

The protein belongs to the acyl carrier protein (ACP) family. In terms of processing, 4'-phosphopantetheine is transferred from CoA to a specific serine of apo-ACP by AcpS. This modification is essential for activity because fatty acids are bound in thioester linkage to the sulfhydryl of the prosthetic group.

The protein resides in the cytoplasm. It functions in the pathway lipid metabolism; fatty acid biosynthesis. In terms of biological role, carrier of the growing fatty acid chain in fatty acid biosynthesis. This chain is Acyl carrier protein, found in Koribacter versatilis (strain Ellin345).